The chain runs to 297 residues: N-acetylmuramic acid 6-phosphate etherase (297 aa).

The SIS domain occupies 55 to 218 (AAAALTRGGR…STGAMVKCGK (164 aa)). E83 serves as the catalytic Proton donor. Residue E114 is part of the active site.

The protein belongs to the GCKR-like family. MurNAc-6-P etherase subfamily. In terms of assembly, homodimer.

It catalyses the reaction N-acetyl-D-muramate 6-phosphate + H2O = N-acetyl-D-glucosamine 6-phosphate + (R)-lactate. Its pathway is amino-sugar metabolism; 1,6-anhydro-N-acetylmuramate degradation. The protein operates within amino-sugar metabolism; N-acetylmuramate degradation. It participates in cell wall biogenesis; peptidoglycan recycling. Functionally, specifically catalyzes the cleavage of the D-lactyl ether substituent of MurNAc 6-phosphate, producing GlcNAc 6-phosphate and D-lactate. Together with AnmK, is also required for the utilization of anhydro-N-acetylmuramic acid (anhMurNAc) either imported from the medium or derived from its own cell wall murein, and thus plays a role in cell wall recycling. The polypeptide is N-acetylmuramic acid 6-phosphate etherase (Cronobacter sakazakii (strain ATCC BAA-894) (Enterobacter sakazakii)).